The chain runs to 565 residues: Wee1-like protein kinase 2 (565 aa).

Disordered stretches follow at residues 18–78 (YCEE…KSPE) and 169–191 (KSNGKRKTRGDFEEAGPGEGNVE). The span at 19 to 29 (CEEESESEGQE) shows a compositional bias: acidic residues. Basic and acidic residues predominate over residues 31-51 (WETRDAHSQIPDRAEGQESEA). Ser76 carries the post-translational modification Phosphoserine. The Nuclear localization signal signature appears at 173–175 (KRK). The region spanning 214 to 492 (FLEVEKIGVG…ARSRVLRPSL (279 aa)) is the Protein kinase domain. Residues 220–228 (IGVGEFGTV) and Lys243 each bind ATP. The Nuclear export signal signature appears at 317-331 (KLKDILLQISLGLKY). The active-site Proton acceptor is the Asp341. Asn346 and Asp382 together coordinate Mg(2+). Residues 495 to 521 (AEELQQQLNLEKFKTATLERELREAQQ) adopt a coiled-coil conformation. Residues 521–565 (QAWFSQEERGDAGVSGTPTGSRSTKRLVGGKSAKSSSFTWGKSSP) form a disordered region. The segment covering 553–565 (AKSSSFTWGKSSP) has biased composition (polar residues).

Belongs to the protein kinase superfamily. Ser/Thr protein kinase family. WEE1 subfamily. In terms of processing, phosphorylation leads to increase its activity.

Its subcellular location is the nucleus. It carries out the reaction L-tyrosyl-[protein] + ATP = O-phospho-L-tyrosyl-[protein] + ADP + H(+). Its function is as follows. Oocyte-specific protein tyrosine kinase that phosphorylates and inhibits CDK1 and acts as a key regulator of meiosis during both prophase I and metaphase II. Required to maintain meiotic arrest in oocytes during the germinal vesicle (GV) stage, a long period of quiescence at dictyate prophase I, by phosphorylating CDK1 at 'Tyr-15', leading to inhibit CDK1 activity and prevent meiotic reentry. Also required for metaphase II exit during egg activation by phosphorylating CDK1 at 'Tyr-15', to ensure exit from meiosis in oocytes and promote pronuclear formation. The protein is Wee1-like protein kinase 2 (WEE2) of Ailuropoda melanoleuca (Giant panda).